We begin with the raw amino-acid sequence, 179 residues long: Ribosomal-protein-serine acetyltransferase (179 aa).

The region spanning 11-172 (LELHAVAENH…NDAYDDVNLY (162 aa)) is the N-acetyltransferase domain.

This sequence belongs to the acetyltransferase family. RimL subfamily.

Its subcellular location is the cytoplasm. It catalyses the reaction N-terminal L-seryl-[ribosomal protein bL12] + acetyl-CoA = N-terminal N(alpha)-acetyl-L-seryl-[ribosomal protein bL12] + CoA + H(+). In terms of biological role, this enzyme acetylates the N-terminal serine of ribosomal protein bL12, converting it into the acetylated form of bL12 known as bL7. This Escherichia coli (strain K12) protein is Ribosomal-protein-serine acetyltransferase.